The following is a 117-amino-acid chain: uncharacterized protein (117 aa).

Residues 76-96 (FIMSSGCFLIASLSCVGLTVF) traverse the membrane as a helical segment.

The protein localises to the membrane. This is an uncharacterized protein from Saccharomyces cerevisiae (strain ATCC 204508 / S288c) (Baker's yeast).